The chain runs to 99 residues: Malonate decarboxylase acyl carrier protein (99 aa).

O-(phosphoribosyl dephospho-coenzyme A)serine is present on serine 25.

The protein belongs to the MdcC family. Post-translationally, covalently binds the prosthetic group of malonate decarboxylase.

Its subcellular location is the cytoplasm. Its function is as follows. Subunit of malonate decarboxylase, it is an acyl carrier protein to which acetyl and malonyl thioester residues are bound via a 2'-(5''-phosphoribosyl)-3'-dephospho-CoA prosthetic group and turn over during the catalytic mechanism. The sequence is that of Malonate decarboxylase acyl carrier protein from Pseudomonas aeruginosa (strain LESB58).